Reading from the N-terminus, the 406-residue chain is Corticosteroid-binding globulin (406 aa).

Positions 1 to 22 (MPLLLYTCLLWLLSSGLWTVQA) are cleaved as a signal peptide. Asn-31 and Asn-96 each carry an N-linked (GlcNAc...) asparagine glycan. Cortisol is bound at residue Gln-255. Asn-261 carries N-linked (GlcNAc...) asparagine glycosylation. Asp-287 is a binding site for cortisol. Asn-331 and Asn-360 each carry an N-linked (GlcNAc...) asparagine glycan. Trp-394 serves as a coordination point for cortisol.

This sequence belongs to the serpin family. In terms of tissue distribution, expressed by the liver; secreted in plasma.

The protein localises to the secreted. Its function is as follows. Major transport protein for glucocorticoids and progestins in the blood of almost all vertebrate species. In Saimiri sciureus (Common squirrel monkey), this protein is Corticosteroid-binding globulin (SERPINA6).